A 464-amino-acid polypeptide reads, in one-letter code: Kynurenine 3-monooxygenase (464 aa).

It belongs to the aromatic-ring hydroxylase family. KMO subfamily. FAD serves as cofactor.

The catalysed reaction is L-kynurenine + NADPH + O2 + H(+) = 3-hydroxy-L-kynurenine + NADP(+) + H2O. It participates in cofactor biosynthesis; NAD(+) biosynthesis; quinolinate from L-kynurenine: step 1/3. Catalyzes the hydroxylation of L-kynurenine (L-Kyn) to form 3-hydroxy-L-kynurenine (L-3OHKyn). Required for synthesis of quinolinic acid. This chain is Kynurenine 3-monooxygenase, found in Myxococcus xanthus (strain DK1622).